The chain runs to 351 residues: Mitogen-activated protein kinase 2 (351 aa).

Residues 16 to 304 form the Protein kinase domain; it reads YEILDVIGEG…AEEALQHNYL (289 aa). ATP is bound by residues 22–30 and K45; that span reads IGEGAYGIV. The active-site Proton acceptor is D140. Phosphothreonine is present on T176. The TXY signature appears at 176 to 178; that stretch reads TEY. Y178 is subject to Phosphotyrosine.

The protein belongs to the protein kinase superfamily. CMGC Ser/Thr protein kinase family. MAP kinase subfamily. Requires Mg(2+) as cofactor. Mn(2+) is required as a cofactor. In terms of processing, dually phosphorylated on Thr-176 and Tyr-178, which activates the enzyme.

The protein resides in the nucleus. It carries out the reaction L-seryl-[protein] + ATP = O-phospho-L-seryl-[protein] + ADP + H(+). It catalyses the reaction L-threonyl-[protein] + ATP = O-phospho-L-threonyl-[protein] + ADP + H(+). Its activity is regulated as follows. Activated by tyrosine and threonine phosphorylation. Inhibited by the MEK inhibitor U0126 but not by the p38 inhibitor SB203580. Cobalt abolishes kinase activity, while calcium, copper and nickel have little effect on kinase activity. In terms of biological role, serine-threonine protein kinase which may be involved in pheromone signaling. Functionally complements the MAPK pheromone signaling pathway in S.cerevisiae. This is Mitogen-activated protein kinase 2 from Pneumocystis carinii.